We begin with the raw amino-acid sequence, 340 residues long: Phenylalanine--tRNA ligase alpha subunit (340 aa).

E254 serves as a coordination point for Mg(2+).

Belongs to the class-II aminoacyl-tRNA synthetase family. Phe-tRNA synthetase alpha subunit type 1 subfamily. As to quaternary structure, tetramer of two alpha and two beta subunits. The cofactor is Mg(2+).

It localises to the cytoplasm. It catalyses the reaction tRNA(Phe) + L-phenylalanine + ATP = L-phenylalanyl-tRNA(Phe) + AMP + diphosphate + H(+). The chain is Phenylalanine--tRNA ligase alpha subunit from Acidithiobacillus ferrooxidans (strain ATCC 23270 / DSM 14882 / CIP 104768 / NCIMB 8455) (Ferrobacillus ferrooxidans (strain ATCC 23270)).